A 144-amino-acid chain; its full sequence is Cytochrome c-type biogenesis protein CcmE (144 aa).

Residues 1 to 7 (MKPRHKR) are Cytoplasmic-facing. Residues 8 to 28 (ALMIVAALAVIGIAALLILNA) traverse the membrane as a helical; Signal-anchor for type II membrane protein segment. The Extracellular portion of the chain corresponds to 29-144 (LNSNIALYVT…EQAQKNGSAK (116 aa)). Positions 121 and 125 each coordinate heme.

It belongs to the CcmE/CycJ family.

It is found in the cell membrane. Functionally, heme chaperone required for the biogenesis of c-type cytochromes. Transiently binds heme delivered by CcmC and transfers the heme to apo-cytochromes in a process facilitated by CcmF and CcmH. In Polynucleobacter asymbioticus (strain DSM 18221 / CIP 109841 / QLW-P1DMWA-1) (Polynucleobacter necessarius subsp. asymbioticus), this protein is Cytochrome c-type biogenesis protein CcmE.